The sequence spans 140 residues: ATP synthase epsilon chain (140 aa).

The protein belongs to the ATPase epsilon chain family. In terms of assembly, F-type ATPases have 2 components, CF(1) - the catalytic core - and CF(0) - the membrane proton channel. CF(1) has five subunits: alpha(3), beta(3), gamma(1), delta(1), epsilon(1). CF(0) has three main subunits: a, b and c.

It localises to the cell inner membrane. In terms of biological role, produces ATP from ADP in the presence of a proton gradient across the membrane. This is ATP synthase epsilon chain from Neisseria meningitidis serogroup B (strain ATCC BAA-335 / MC58).